We begin with the raw amino-acid sequence, 482 residues long: GTPase Obg (482 aa).

The 158-residue stretch at 2-159 folds into the Obg domain; the sequence is PRFIDRVVVH…RELTLELKTV (158 aa). An OBG-type G domain is found at 160–341; it reads ADVGLVGFPS…LIFALWDMVA (182 aa). GTP-binding positions include 166–173, 191–195, 212–215, 292–295, and 322–324; these read GFPSAGKS, FTTLA, DVPG, NKID, and STV. 2 residues coordinate Mg(2+): Ser173 and Thr193. An OCT domain is found at 359–437; the sequence is PIPVDETAFS…IGDMTFDWEP (79 aa). A disordered region spans residues 450–482; the sequence is RGTDVRLEQTDRVGADERKAARKARRQSDDGEE. The segment covering 452–468 has biased composition (basic and acidic residues); sequence TDVRLEQTDRVGADERK.

The protein belongs to the TRAFAC class OBG-HflX-like GTPase superfamily. OBG GTPase family. As to quaternary structure, monomer. Mg(2+) is required as a cofactor.

It is found in the cytoplasm. Functionally, an essential GTPase which binds GTP, GDP and possibly (p)ppGpp with moderate affinity, with high nucleotide exchange rates and a fairly low GTP hydrolysis rate. Plays a role in control of the cell cycle, stress response, ribosome biogenesis and in those bacteria that undergo differentiation, in morphogenesis control. The sequence is that of GTPase Obg from Mycolicibacterium gilvum (strain PYR-GCK) (Mycobacterium gilvum (strain PYR-GCK)).